A 379-amino-acid chain; its full sequence is Dual-specificity RNA methyltransferase RlmN (379 aa).

Residue E97 is the Proton acceptor of the active site. A Radical SAM core domain is found at 103–343 (QGGRGTLCVS…VRTTRGDDID (241 aa)). The cysteines at positions 110 and 346 are disulfide-linked. C117, C121, and C124 together coordinate [4Fe-4S] cluster. S-adenosyl-L-methionine-binding positions include 171-172 (GE), S203, 225-227 (SLH), and N303. C346 functions as the S-methylcysteine intermediate in the catalytic mechanism.

It belongs to the radical SAM superfamily. RlmN family. It depends on [4Fe-4S] cluster as a cofactor.

It localises to the cytoplasm. It carries out the reaction adenosine(2503) in 23S rRNA + 2 reduced [2Fe-2S]-[ferredoxin] + 2 S-adenosyl-L-methionine = 2-methyladenosine(2503) in 23S rRNA + 5'-deoxyadenosine + L-methionine + 2 oxidized [2Fe-2S]-[ferredoxin] + S-adenosyl-L-homocysteine. The enzyme catalyses adenosine(37) in tRNA + 2 reduced [2Fe-2S]-[ferredoxin] + 2 S-adenosyl-L-methionine = 2-methyladenosine(37) in tRNA + 5'-deoxyadenosine + L-methionine + 2 oxidized [2Fe-2S]-[ferredoxin] + S-adenosyl-L-homocysteine. Its function is as follows. Specifically methylates position 2 of adenine 2503 in 23S rRNA and position 2 of adenine 37 in tRNAs. m2A2503 modification seems to play a crucial role in the proofreading step occurring at the peptidyl transferase center and thus would serve to optimize ribosomal fidelity. The chain is Dual-specificity RNA methyltransferase RlmN from Pseudomonas aeruginosa (strain ATCC 15692 / DSM 22644 / CIP 104116 / JCM 14847 / LMG 12228 / 1C / PRS 101 / PAO1).